A 386-amino-acid polypeptide reads, in one-letter code: Acetylornithine aminotransferase (386 aa).

Pyridoxal 5'-phosphate is bound by residues 96–97 (GA) and F123. R126 contributes to the N(2)-acetyl-L-ornithine binding site. 208–211 (DEVQ) lines the pyridoxal 5'-phosphate pocket. At K237 the chain carries N6-(pyridoxal phosphate)lysine. A N(2)-acetyl-L-ornithine-binding site is contributed by S265. T266 provides a ligand contact to pyridoxal 5'-phosphate.

It belongs to the class-III pyridoxal-phosphate-dependent aminotransferase family. ArgD subfamily. Homodimer. It depends on pyridoxal 5'-phosphate as a cofactor.

It is found in the cytoplasm. The enzyme catalyses N(2)-acetyl-L-ornithine + 2-oxoglutarate = N-acetyl-L-glutamate 5-semialdehyde + L-glutamate. It functions in the pathway amino-acid biosynthesis; L-arginine biosynthesis; N(2)-acetyl-L-ornithine from L-glutamate: step 4/4. The chain is Acetylornithine aminotransferase from Bacillus anthracis.